A 350-amino-acid polypeptide reads, in one-letter code: DNA repair protein RAD51 homolog 2 (350 aa).

Positions 1-75 are interaction with RAD51C; that stretch reads MSSKKLRRVG…TAYELKTRRS (75 aa). 108–115 is an ATP binding site; sequence GPPGCGKT.

The protein belongs to the RecA family. RAD51 subfamily. As to quaternary structure, part of the BCDX2 complex consisting of RAD51B, RAD51C, RAD51D and XRCC2; the complex has a ring-like structure arranged into a flat disc around a central channel. The BCDX2 subcomplex RAD51B:RAD51C interacts with RAD51. Interacts with SWSAP1; involved in homologous recombination repair. Interacts with HELQ. Phosphorylated on tyrosine residues by BCR-ABL. As to expression, expressed in a wide range of tissues.

Its subcellular location is the nucleus. Involved in the homologous recombination repair (HRR) pathway of double-stranded DNA breaks arising during DNA replication or induced by DNA-damaging agents. May promote the assembly of presynaptic RAD51 nucleoprotein filaments. Binds single-stranded DNA and double-stranded DNA and has DNA-dependent ATPase activity. Part of the RAD51 paralog protein complex BCDX2 which acts in the BRCA1-BRCA2-dependent HR pathway. Upon DNA damage, BCDX2 acts downstream of BRCA2 recruitment and upstream of RAD51 recruitment. BCDX2 binds predominantly to the intersection of the four duplex arms of the Holliday junction and to junction of replication forks. The BCDX2 complex was originally reported to bind single-stranded DNA, single-stranded gaps in duplex DNA and specifically to nicks in duplex DNA. The BCDX2 subcomplex RAD51B:RAD51C exhibits single-stranded DNA-dependent ATPase activity suggesting an involvement in early stages of the HR pathway. The chain is DNA repair protein RAD51 homolog 2 (Rad51b) from Mus musculus (Mouse).